An 84-amino-acid polypeptide reads, in one-letter code: MNYSTLIAVASLLTAGTESKKDGYPVEGSCAFPCGYDNAYCDKLCKERKADSGYCYWVNILCYCYGLPDNAAIKGYGRCKPGKK.

Residues 1 to 19 form the signal peptide; the sequence is MNYSTLIAVASLLTAGTES. Positions 21 to 80 constitute an LCN-type CS-alpha/beta domain; the sequence is KDGYPVEGSCAFPCGYDNAYCDKLCKERKADSGYCYWVNILCYCYGLPDNAAIKGYGRCK. Cystine bridges form between cysteine 30–cysteine 79, cysteine 34–cysteine 55, cysteine 41–cysteine 62, and cysteine 45–cysteine 64. Proline 81 is subject to Proline amide.

Belongs to the long (4 C-C) scorpion toxin superfamily. Sodium channel inhibitor family. Alpha subfamily. As to expression, expressed by the venom gland.

The protein localises to the secreted. Functionally, alpha toxins bind voltage-independently at site-3 of sodium channels (Nav) and inhibit the inactivation of the activated channels, thereby blocking neuronal transmission. The sequence is that of Toxin To10 from Tityus obscurus (Amazonian scorpion).